Consider the following 245-residue polypeptide: MKLFVYHTPELTPKDQVPDCAIAVDVLRATSTIATVLSAGGEAVQVFSDLDELIAVSETWPPQKRLRAGERGGGKVAGFELGNSPLDCTPELVEGRRLFISTTNGTRALKRVQDSATVLTAAFINRAAVVQYLLEKQPETVWIVGSGWEGSYSLEDTACAGAIAHSVVEKSQLPPEKLAGNDEVISAIALYSQWQDNLLGLLHHASHGQRLLRLECHEDLKYCSQTDVLTVLPIQQEAGVFKTKN.

The protein belongs to the ComB family. It depends on Mg(2+) as a cofactor.

It catalyses the reaction (2R)-O-phospho-3-sulfolactate + H2O = (2R)-3-sulfolactate + phosphate. The sequence is that of Probable 2-phosphosulfolactate phosphatase from Trichormus variabilis (strain ATCC 29413 / PCC 7937) (Anabaena variabilis).